The primary structure comprises 257 residues: Small ribosomal subunit protein uS2 (257 aa).

The protein belongs to the universal ribosomal protein uS2 family.

This is Small ribosomal subunit protein uS2 from Ruegeria pomeroyi (strain ATCC 700808 / DSM 15171 / DSS-3) (Silicibacter pomeroyi).